The chain runs to 207 residues: Putative tributyltin chloride resistance protein (207 aa).

The tract at residues 37-122 (NLPIELALMP…YHAIAALNLG (86 aa)) is slt-type domain. The active site involves Glu-49.

The protein belongs to the transglycosylase Slt family.

In Alteromonas sp. (strain M-1), this protein is Putative tributyltin chloride resistance protein (tbtA).